A 502-amino-acid chain; its full sequence is MSSNLPAAFANNFLGQSSTWYKTTILAFLVINPVVYAIDPFIAGWVLILEFIFTLAMALKCYPLQPGGLLAIEAVILGMTSPESVFHETEANFEVILLLIFMVAGIYFMKDLLLYVFTKILLGIRSKIVLSLLFSLVAAVLSAFLDALTVTAVLIAVAVGFYAVYHQFASGGGLSSNQYDHTDDSKVDSSNREDLEGFRSFLRSLIMHGAVGTALGGVCTLVGEPQNLLIAQQADWNFVEFFLQVAPVSMPTLIGGLVTCIAVEKLGIFGYGAQLPDKVRTILMDFDKQETSKRTNRDIAALVVQALAGVVLMVSLALHLAEVGLIGLLVIILLTSFNGITEEHRIGHAFEEALPFTALLVVFFAVVAVIHDQHLFEPITHMLLHMDESVQGPMFFIANGLLSMISDNVFVATVYITEVKNALVAGDISREHFDLLAVAINTGTNLPSVATPNGQAAFLFLLTSALAPLIRLSYGRMVLMALPYTIVLSVIGYIAVYQLAAG.

Helical transmembrane passes span 27-49 (AFLV…VLIL), 66-86 (PGGL…ESVF), 95-115 (VILL…LLLY), 128-148 (IVLS…LDAL), 149-169 (TVTA…HQFA), 241-261 (FFLQ…VTCI), 299-318 (IAAL…SLAL), 350-370 (FEEA…VAVI), 394-414 (MFFI…VATV), 450-470 (ATPN…APLI), and 477-497 (MVLM…IAVY).

It belongs to the NhaB Na(+)/H(+) (TC 2.A.34) antiporter family.

Its subcellular location is the cell inner membrane. It catalyses the reaction 2 Na(+)(in) + 3 H(+)(out) = 2 Na(+)(out) + 3 H(+)(in). Functionally, na(+)/H(+) antiporter that extrudes sodium in exchange for external protons. The sequence is that of Na(+)/H(+) antiporter NhaB from Teredinibacter turnerae (strain ATCC 39867 / T7901).